Reading from the N-terminus, the 199-residue chain is Recombination protein RecR (199 aa).

The C4-type zinc finger occupies 58 to 73 (CSVCYNLSETELCRIC). A Toprim domain is found at 81–176 (TRLCVVEQPR…EITRLARGIT (96 aa)).

It belongs to the RecR family.

Functionally, may play a role in DNA repair. It seems to be involved in an RecBC-independent recombinational process of DNA repair. It may act with RecF and RecO. This chain is Recombination protein RecR, found in Rhodopirellula baltica (strain DSM 10527 / NCIMB 13988 / SH1).